The sequence spans 187 residues: Elongation factor P (187 aa).

This sequence belongs to the elongation factor P family.

It localises to the cytoplasm. The protein operates within protein biosynthesis; polypeptide chain elongation. In terms of biological role, involved in peptide bond synthesis. Stimulates efficient translation and peptide-bond synthesis on native or reconstituted 70S ribosomes in vitro. Probably functions indirectly by altering the affinity of the ribosome for aminoacyl-tRNA, thus increasing their reactivity as acceptors for peptidyl transferase. The sequence is that of Elongation factor P from Prochlorococcus marinus (strain NATL1A).